The chain runs to 177 residues: ATP synthase subunit delta (177 aa).

The protein belongs to the ATPase delta chain family. As to quaternary structure, F-type ATPases have 2 components, F(1) - the catalytic core - and F(0) - the membrane proton channel. F(1) has five subunits: alpha(3), beta(3), gamma(1), delta(1), epsilon(1). F(0) has three main subunits: a(1), b(2) and c(10-14). The alpha and beta chains form an alternating ring which encloses part of the gamma chain. F(1) is attached to F(0) by a central stalk formed by the gamma and epsilon chains, while a peripheral stalk is formed by the delta and b chains.

The protein resides in the cell inner membrane. In terms of biological role, f(1)F(0) ATP synthase produces ATP from ADP in the presence of a proton or sodium gradient. F-type ATPases consist of two structural domains, F(1) containing the extramembraneous catalytic core and F(0) containing the membrane proton channel, linked together by a central stalk and a peripheral stalk. During catalysis, ATP synthesis in the catalytic domain of F(1) is coupled via a rotary mechanism of the central stalk subunits to proton translocation. This protein is part of the stalk that links CF(0) to CF(1). It either transmits conformational changes from CF(0) to CF(1) or is implicated in proton conduction. The sequence is that of ATP synthase subunit delta from Shewanella halifaxensis (strain HAW-EB4).